We begin with the raw amino-acid sequence, 561 residues long: Putative transport protein Ent638_1362 (561 aa).

Helical transmembrane passes span 8-28, 32-52, 66-86, 94-114, and 158-178; these read LLNG…LCLG, LGSV…LLGQ, FMLF…SIFF, MLAL…GKLF, and HLSL…IVAA. RCK C-terminal domains follow at residues 202–288 and 292–373; these read LDTD…SFRN and VFDR…RIGF. 5 helical membrane-spanning segments follow: residues 383–403, 406–426, 447–467, 475–495, and 540–560; these read LLAF…TFQF, FSFG…LGFL, FGLM…IGHS, MLVA…LFGA, and AIAN…WPGL.

The protein belongs to the AAE transporter (TC 2.A.81) family. YbjL subfamily.

Its subcellular location is the cell membrane. In Enterobacter sp. (strain 638), this protein is Putative transport protein Ent638_1362.